A 322-amino-acid chain; its full sequence is Cysteine synthase (322 aa).

The hydrogen sulfide site is built by Asn-8 and Arg-35. The residue at position 42 (Lys-42) is an N6-(pyridoxal phosphate)lysine. Pyridoxal 5'-phosphate is bound by residues Asn-72 and 177–181 (GTGGT). Leu-269 provides a ligand contact to hydrogen sulfide. Residue Ser-273 coordinates pyridoxal 5'-phosphate.

This sequence belongs to the cysteine synthase/cystathionine beta-synthase family. In terms of assembly, homodimer. Pyridoxal 5'-phosphate serves as cofactor.

It carries out the reaction O-acetyl-L-serine + hydrogen sulfide = L-cysteine + acetate. The protein operates within amino-acid biosynthesis; L-cysteine biosynthesis; L-cysteine from L-serine: step 2/2. This Buchnera aphidicola subsp. Schizaphis graminum (strain Sg) protein is Cysteine synthase (cysK).